The following is a 373-amino-acid chain: Putative gustatory receptor 10b (373 aa).

The Cytoplasmic portion of the chain corresponds to 1 to 8 (MRVGKLCR). A helical transmembrane segment spans residues 9–29 (LALRFWMGLILVLGFSSHYYN). The Extracellular portion of the chain corresponds to 30-82 (PTRRRLVYSRILQTYDWLLMVINLGAFYLYYRYAMTYFLEGMFRRQGFVNQVS). Residues 83-103 (TCNVFQQLLMAVTGTWLHFLF) form a helical membrane-spanning segment. Residues 104–132 (ERHVCQTYNELSRILKHDLKLKEHSRFYC) are Cytoplasmic-facing. The chain crosses the membrane as a helical span at residues 133–153 (LAFLAKVYNFFHNFNFALSAI). At 154 to 170 (MHWGLRPFNVWDLLANL) the chain is on the extracellular side. Residues 171–191 (YFVYNSLARDAILVAYVLLLL) form a helical membrane-spanning segment. Over 192 to 230 (NLSEALRLNGQQEHDTYSDLMKQLRRRERLLRIGRRVHR) the chain is Cytoplasmic. Residues 231 to 251 (MFAWLVAIALIYLVFFNTATI) form a helical membrane-spanning segment. The Extracellular portion of the chain corresponds to 252-273 (YLGYTMFIQKHDALGLRGRGLK). A helical transmembrane segment spans residues 274–294 (MLLTVVSFLVILWDVVLLQVI). Residues 295–350 (CEKLLAEENKICDCPEDVASSRTTYRQWEMSALRRAITRSSPENNVLGMFRMDMRC) are Cytoplasmic-facing. A helical transmembrane segment spans residues 351–371 (AFALISCSLSYGIIIIQIGYI). At 372-373 (PG) the chain is on the extracellular side.

The protein belongs to the insect chemoreceptor superfamily. Gustatory receptor (GR) family. Gr10a subfamily.

Its subcellular location is the cell membrane. Functionally, probable gustatory receptor which mediates acceptance or avoidance behavior, depending on its substrates. This is Putative gustatory receptor 10b (Gr10b) from Drosophila melanogaster (Fruit fly).